A 331-amino-acid chain; its full sequence is Cytosolic sulfotransferase 1 (331 aa).

A 3'-phosphoadenylyl sulfate-binding site is contributed by 74 to 79 (KSGTTW). The active-site Proton acceptor is the histidine 143. 3'-phosphoadenylyl sulfate-binding positions include arginine 165, serine 173, tyrosine 231, and 297-299 (RKG).

It belongs to the sulfotransferase 1 family.

It localises to the cytoplasm. In terms of biological role, sulfotransferase that utilizes 3'-phospho-5'-adenylyl sulfate (PAPS) as sulfonate donor. This Arabidopsis thaliana (Mouse-ear cress) protein is Cytosolic sulfotransferase 1 (SOT1).